The following is a 339-amino-acid chain: Uroporphyrinogen decarboxylase (339 aa).

Residues 21–25 (RQAGR), Phe40, Asp71, Tyr147, Ser202, and His315 contribute to the substrate site.

It belongs to the uroporphyrinogen decarboxylase family. As to quaternary structure, homodimer.

The protein resides in the cytoplasm. It carries out the reaction uroporphyrinogen III + 4 H(+) = coproporphyrinogen III + 4 CO2. The protein operates within porphyrin-containing compound metabolism; protoporphyrin-IX biosynthesis; coproporphyrinogen-III from 5-aminolevulinate: step 4/4. Catalyzes the decarboxylation of four acetate groups of uroporphyrinogen-III to yield coproporphyrinogen-III. This chain is Uroporphyrinogen decarboxylase, found in Helicobacter pylori (strain ATCC 700392 / 26695) (Campylobacter pylori).